Here is a 177-residue protein sequence, read N- to C-terminus: Thymidine kinase (177 aa).

Residue 11-18 (GPMFSGKS) participates in ATP binding. Glu83 functions as the Proton acceptor in the catalytic mechanism. Substrate is bound at residue Phe113. Residues Cys138 and Cys141 each contribute to the Zn(2+) site. Residue 157–161 (IEIIG) coordinates substrate. Residues Cys170 and Cys173 each contribute to the Zn(2+) site.

Belongs to the thymidine kinase family. As to quaternary structure, homotetramer. Two molecules of substrate bind to each enzyme tetramer.

The catalysed reaction is thymidine + ATP = dTMP + ADP + H(+). Phosphorylates thymidine and thymidine analogs, such as azidothymidine (AZT). Part of the salvage pathway for pyrimidine deoxyribonucleotide synthesis. The protein is Thymidine kinase (OPG101) of Variola virus.